The sequence spans 279 residues: Movement protein (279 aa).

Residues 255-279 (SPPFAIGSPSASRNNSFRSQVVNGL) are disordered. Polar residues predominate over residues 263–279 (PSASRNNSFRSQVVNGL).

The protein belongs to the cucumovirus movement protein family.

It localises to the host cell junction. Its subcellular location is the host plasmodesma. Transports viral genome to neighboring plant cells directly through plasmosdesmata, without any budding. The movement protein allows efficient cell to cell propagation, by bypassing the host cell wall barrier. Acts by forming a tubular structure at the host plasmodesmata, enlarging it enough to allow free passage of virion capsids. The protein is Movement protein of Cucumis sativus (Cucumber).